The following is a 364-amino-acid chain: Histidinol-phosphate aminotransferase (364 aa).

Position 226 is an N6-(pyridoxal phosphate)lysine (Lys-226).

The protein belongs to the class-II pyridoxal-phosphate-dependent aminotransferase family. Histidinol-phosphate aminotransferase subfamily. In terms of assembly, homodimer. The cofactor is pyridoxal 5'-phosphate.

The catalysed reaction is L-histidinol phosphate + 2-oxoglutarate = 3-(imidazol-4-yl)-2-oxopropyl phosphate + L-glutamate. It participates in amino-acid biosynthesis; L-histidine biosynthesis; L-histidine from 5-phospho-alpha-D-ribose 1-diphosphate: step 7/9. This is Histidinol-phosphate aminotransferase from Campylobacter jejuni subsp. jejuni serotype O:6 (strain 81116 / NCTC 11828).